The primary structure comprises 202 residues: Glycerol-3-phosphate acyltransferase (202 aa).

A run of 5 helical transmembrane segments spans residues 3 to 23 (NLII…LILA), 87 to 107 (LLWS…YLLF), 118 to 138 (GAMI…WVVI), 144 to 164 (ISSL…FIFN), and 167 to 187 (LEIH…YKHL).

The protein belongs to the PlsY family. In terms of assembly, probably interacts with PlsX.

The protein localises to the cell inner membrane. The catalysed reaction is an acyl phosphate + sn-glycerol 3-phosphate = a 1-acyl-sn-glycero-3-phosphate + phosphate. It participates in lipid metabolism; phospholipid metabolism. In terms of biological role, catalyzes the transfer of an acyl group from acyl-phosphate (acyl-PO(4)) to glycerol-3-phosphate (G3P) to form lysophosphatidic acid (LPA). This enzyme utilizes acyl-phosphate as fatty acyl donor, but not acyl-CoA or acyl-ACP. The polypeptide is Glycerol-3-phosphate acyltransferase (Campylobacter jejuni (strain RM1221)).